We begin with the raw amino-acid sequence, 44 residues long: DKLIGSCVWGATNYTSDCNAECKRRGYKGGHCGSFWNVNCWCEE.

Disulfide bonds link Cys-7–Cys-32, Cys-18–Cys-40, and Cys-22–Cys-42.

As to expression, hemolymph.

The protein localises to the secreted. In terms of biological role, has antibacterial activity against the Gram-positive bacterium S.lutea (MIC=1.9 uM). Lacks antibacterial activity against the Gram-positive bacteria L.monocytogenes and M.luteus, and the Gram-negative bacteria E.coli D31, E.coli ATCC 25922, and S.typhimurium. Has antifungal activity against A.niger (MIC=2.9 uM), C.albicans (MIC=2.9 uM), C.fructus (MIC=2.9 uM), C.wickerhamii (MIC=2.9 uM), P.pastoris (MIC=2.9 uM), P.stiptis (MIC=2.9 uM), P.tannophilus (MIC=2.9 uM), T.harzianum (MIC=2.9 uM), and Z.marxianus (MIC=2.9 uM), but lacks antifungal activity against C.albidus, F.oxysporum, and S.cerevisiae. This Galleria mellonella (Greater wax moth) protein is Defensin-like peptide.